Here is a 189-residue protein sequence, read N- to C-terminus: MAIKSDRWIREMSEKHGMIEPYAENQVRFDKNGEKLISYGVSSYGYDVRCAREFKVFTNVHSAIVDPKNFDEKSFIDIESDVCIIPPNSFALARTIEYFRIPRNVLTVCLGKSTYARCGIIVNVTPLEPEWEGHVTLEFSNTTNLPARIYAGEGVAQMLFFESDEVCETSYKDRGGKYQGQTGVTLPKT.

DCTP is bound by residues Lys112–Arg117, Thr136–Glu138, Gln157, Tyr171, and Gln181. The Proton donor/acceptor role is filled by Glu138.

The protein belongs to the dCTP deaminase family. Homotrimer.

The enzyme catalyses dCTP + H2O + H(+) = dUTP + NH4(+). It participates in pyrimidine metabolism; dUMP biosynthesis; dUMP from dCTP (dUTP route): step 1/2. Functionally, catalyzes the deamination of dCTP to dUTP. This Acinetobacter baumannii (strain SDF) protein is dCTP deaminase.